The chain runs to 102 residues: Small ribosomal subunit protein uS10 (102 aa).

The protein belongs to the universal ribosomal protein uS10 family. As to quaternary structure, part of the 30S ribosomal subunit.

Involved in the binding of tRNA to the ribosomes. This is Small ribosomal subunit protein uS10 from Halalkalibacterium halodurans (strain ATCC BAA-125 / DSM 18197 / FERM 7344 / JCM 9153 / C-125) (Bacillus halodurans).